The chain runs to 150 residues: MRVVIQRVLKASVTINHQLKSSIGQGLLIFLGIEENDKQEDIDFLVKKIVNLRIFNDNKGAMNRSLLDIEGELLCVSQFTLFASTKKGNRPSYIRASKSEKAIPLYEKFCATISSAMSKIIQTGTFKTNMKIKLINDGPVTICIDSKNRE.

The short motif at 138–139 is the Gly-cisPro motif, important for rejection of L-amino acids element; it reads GP.

Belongs to the DTD family. Homodimer.

Its subcellular location is the cytoplasm. The catalysed reaction is glycyl-tRNA(Ala) + H2O = tRNA(Ala) + glycine + H(+). It carries out the reaction a D-aminoacyl-tRNA + H2O = a tRNA + a D-alpha-amino acid + H(+). Functionally, an aminoacyl-tRNA editing enzyme that deacylates mischarged D-aminoacyl-tRNAs. Also deacylates mischarged glycyl-tRNA(Ala), protecting cells against glycine mischarging by AlaRS. Acts via tRNA-based rather than protein-based catalysis; rejects L-amino acids rather than detecting D-amino acids in the active site. By recycling D-aminoacyl-tRNA to D-amino acids and free tRNA molecules, this enzyme counteracts the toxicity associated with the formation of D-aminoacyl-tRNA entities in vivo and helps enforce protein L-homochirality. The sequence is that of D-aminoacyl-tRNA deacylase from Azobacteroides pseudotrichonymphae genomovar. CFP2.